The chain runs to 104 residues: L-rhamnose mutarotase (104 aa).

Tyr18 is a substrate binding site. His22 acts as the Proton donor in catalysis. Residues Tyr41 and 76–77 (WW) contribute to the substrate site.

It belongs to the rhamnose mutarotase family. As to quaternary structure, homodimer.

The protein resides in the cytoplasm. It carries out the reaction alpha-L-rhamnose = beta-L-rhamnose. It functions in the pathway carbohydrate metabolism; L-rhamnose metabolism. In terms of biological role, involved in the anomeric conversion of L-rhamnose. In Escherichia coli O1:K1 / APEC, this protein is L-rhamnose mutarotase.